The chain runs to 162 residues: Caveolin-2 (162 aa).

Residues 1–86 lie on the Cytoplasmic side of the membrane; it reads MGLETEKADV…FEISKYVIYK (86 aa). Y19 is subject to Phosphotyrosine; by SRC. Residues S20 and S23 each carry the phosphoserine modification. Y27 carries the post-translational modification Phosphotyrosine; by SRC. S36 carries the phosphoserine modification. An intramembrane region (helical) is located at residues 87 to 107; sequence FLTVFLAIPLAFTAGILFATL. The Cytoplasmic portion of the chain corresponds to 108 to 162; that stretch reads SCLHIWIIMPFVKTCLMVLPSVQTIWRSVTDVIIAPLCTSIGRICSSVSLQVSHD.

The protein belongs to the caveolin family. In terms of assembly, monomer or homodimer. Interacts with CAV1; the interaction forms a stable heterooligomeric complex that is required for targeting to lipid rafts and for caveolae formation. Tyrosine phosphorylated forms do not form heterooligomers with the Tyr-19-phosphorylated form existing as a monomer or dimer, and the Tyr-27-form as a monomer only. Interacts (tyrosine phosphorylated form) with the SH2 domain-containing proteins, RASA1, NCK1 and SRC. Interacts (tyrosine phosphorylated form) with INSR, the interaction (Tyr-27-phosphorylated form) is increased on insulin stimulation. Interacts (Tyr-19 phosphorylated form) with MAPK1 (phosphorylated form); the interaction, promoted by insulin, leads to nuclear location and MAPK1 activation. Interacts with STAT3; the interaction is increased on insulin-induced tyrosine phosphorylation leading to STAT activation. Post-translationally, phosphorylated on serine and tyrosine residues. CAV1 promotes phosphorylation on Ser-23 which then targets the complex to the plasma membrane, lipid rafts and caveolae. Phosphorylation on Ser-36 appears to modulate mitosis in endothelial cells. Phosphorylation on both Tyr-19 and Tyr-27 is required for insulin-induced 'Ser-727' phosphorylation of STAT3 and its activation. Phosphorylation on Tyr-19 is required for insulin-induced phosphorylation of MAPK1 and DNA binding of STAT3. Tyrosine phosphorylation is induced by both EGF and insulin (By. similarity).

Its subcellular location is the nucleus. It localises to the cytoplasm. It is found in the golgi apparatus membrane. The protein localises to the cell membrane. The protein resides in the membrane. Its subcellular location is the caveola. In terms of biological role, may act as a scaffolding protein within caveolar membranes. Interacts directly with G-protein alpha subunits and can functionally regulate their activity. Acts as an accessory protein in conjunction with CAV1 in targeting to lipid rafts and driving caveolae formation. The Ser-36 phosphorylated form has a role in modulating mitosis in endothelial cells. Positive regulator of cellular mitogenesis of the MAPK signaling pathway. Required for the insulin-stimulated nuclear translocation and activation of MAPK1 and STAT3, and the subsequent regulation of cell cycle progression. In Atelerix albiventris (Middle-African hedgehog), this protein is Caveolin-2 (CAV2).